Consider the following 276-residue polypeptide: 6-chlorohydroxyquinol 1,2-dioxygenase (276 aa).

Residues Tyr157, Tyr191, His215, and His217 each coordinate Fe cation.

The protein belongs to the intradiol ring-cleavage dioxygenase family. Fe(3+) is required as a cofactor.

The protein operates within aromatic compound metabolism. Its pathway is xenobiotic degradation. Functionally, involved in the degradation of 2,4,6-trichlorophenol (2,4,6-TCP). May catalyze the oxidation of 6-chlorohydroxyquinol (6-CHQ) to 2-chloromaleylacetate (2-CMA). This Cupriavidus pinatubonensis (strain JMP 134 / LMG 1197) (Cupriavidus necator (strain JMP 134)) protein is 6-chlorohydroxyquinol 1,2-dioxygenase.